Here is a 462-residue protein sequence, read N- to C-terminus: Sensor histidine kinase RegB (462 aa).

Residues Met-1–Leu-25 lie on the Cytoplasmic side of the membrane. A helical transmembrane segment spans residues Leu-26 to Leu-45. Residues Gly-46–Met-51 are Extracellular-facing. The chain crosses the membrane as a helical span at residues Gly-52–Phe-70. Residues Val-71–Leu-78 lie on the Cytoplasmic side of the membrane. The chain crosses the membrane as a helical span at residues Thr-79 to Phe-96. At Leu-97–Gly-103 the chain is on the extracellular side. A helical transmembrane segment spans residues Leu-104–Leu-123. Residues Asp-124–Val-129 lie on the Cytoplasmic side of the membrane. The helical transmembrane segment at Ile-130–Leu-149 threads the bilayer. Residues Ile-150–Glu-164 lie on the Extracellular side of the membrane. Residues Phe-165–Ser-182 traverse the membrane as a helical segment. At Arg-183–Thr-462 the chain is on the cytoplasmic side. The Histidine kinase domain maps to Ala-218–Arg-445. Position 221 is a phosphohistidine; by autocatalysis (His-221).

It localises to the cell inner membrane. It catalyses the reaction ATP + protein L-histidine = ADP + protein N-phospho-L-histidine.. Member of the two-component regulatory system RegB/RegA. Involved in the positive regulation of photosynthesis gene expression in response to anaerobiosis. Also involved in positive regulation of the cbbI and cbbII Calvin cycle CO2 fixation operons, as well as in regulation of expression of genes involved in alternative CO2 fixation pathways. Phosphorylates RegA/PrrA. In Cereibacter sphaeroides (Rhodobacter sphaeroides), this protein is Sensor histidine kinase RegB (regB).